The following is a 280-amino-acid chain: Acetyl-coenzyme A carboxylase carboxyl transferase subunit beta (280 aa).

A CoA carboxyltransferase N-terminal domain is found at 26 to 280; the sequence is LWQKCPRCGE…TKLLAWHSQK (255 aa). Cys30, Cys33, Cys49, and Cys52 together coordinate Zn(2+). The segment at 30–52 adopts a C4-type zinc-finger fold; that stretch reads CPRCGEIIFNKELEKNFKVCPKC.

It belongs to the AccD/PCCB family. In terms of assembly, acetyl-CoA carboxylase is a heterohexamer composed of biotin carboxyl carrier protein (AccB), biotin carboxylase (AccC) and two subunits each of ACCase subunit alpha (AccA) and ACCase subunit beta (AccD). It depends on Zn(2+) as a cofactor.

The protein resides in the cytoplasm. The catalysed reaction is N(6)-carboxybiotinyl-L-lysyl-[protein] + acetyl-CoA = N(6)-biotinyl-L-lysyl-[protein] + malonyl-CoA. Its pathway is lipid metabolism; malonyl-CoA biosynthesis; malonyl-CoA from acetyl-CoA: step 1/1. Component of the acetyl coenzyme A carboxylase (ACC) complex. Biotin carboxylase (BC) catalyzes the carboxylation of biotin on its carrier protein (BCCP) and then the CO(2) group is transferred by the transcarboxylase to acetyl-CoA to form malonyl-CoA. The chain is Acetyl-coenzyme A carboxylase carboxyl transferase subunit beta from Carboxydothermus hydrogenoformans (strain ATCC BAA-161 / DSM 6008 / Z-2901).